A 1372-amino-acid chain; its full sequence is Cell fusion protein fus1 (1372 aa).

In terms of domain architecture, GBD/FH3 spans 104-522 (LCPDDPNLVN…EQGNNAPGYS (419 aa)). Positions 802 to 817 (PFKAPPPAPLPPPAPP) match the SH3-binding motif. The FH2 domain maps to 868–1278 (PGELCNPSKR…AFLRLQALKA (411 aa)).

Belongs to the formin homology family. BNI1 subfamily. Interacts with actin at the FH2 domain.

Its subcellular location is the cytoplasm. Required for cell fusion. It associates with the pre-zygotic projection tips in conjugating cells. This chain is Cell fusion protein fus1 (fus1), found in Schizosaccharomyces pombe (strain 972 / ATCC 24843) (Fission yeast).